The primary structure comprises 276 residues: Zinc transporter ZTP29 (276 aa).

Residues 1–6 (MDSQML) are Cytoplasmic-facing. The chain crosses the membrane as a helical span at residues 7-27 (VALGLSLVGGLSTSLGALFVV). At 28–35 (LSETPNMK) the chain is on the lumenal side. The chain crosses the membrane as a helical span at residues 36 to 56 (MLGLLQGFASGLMLSISFLDL). Over 57–63 (AHNAINS) the chain is Cytoplasmic. Residues 64–84 (IGFFKANLWFFGGVIFFACIT) traverse the membrane as a helical segment. Residues 85-123 (KFIPEPTLGPSTDGKRRKKNGDEGGKDMMKKHRKQVLYS) are Lumenal-facing. A helical transmembrane segment spans residues 124-144 (GLITAIGISLHNFPEGMAVFL). The Cytoplasmic portion of the chain corresponds to 145-156 (GSIKGMRVGVNL). A helical membrane pass occupies residues 157–177 (ALAIALHNIPEGVAVALPIYF). The Lumenal segment spans residues 178-187 (ATESKWQAFK). A helical transmembrane segment spans residues 188–208 (LATLSGLAEPLGVIIVAYLFP). At 209–219 (RSLSPEILEGL) the chain is on the cytoplasmic side. The helical transmembrane segment at 220–240 (LGAVGGIMAFLTLHEMLPLAF) threads the bilayer. Over 241-250 (DYAGQKQAVK) the chain is Lumenal. Residues 251–271 (AVFFGMACMSASLYFLELSLP) traverse the membrane as a helical segment. The Cytoplasmic portion of the chain corresponds to 272-276 (ETMSL).

This sequence belongs to the ZIP transporter (TC 2.A.5) family. ZupT subfamily. In terms of tissue distribution, expressed in hypocotyls, cotyledons, leaves and anthers.

It is found in the endoplasmic reticulum membrane. Zinc transporter involved response to salt stress. May act through the regulation of zinc levels required to induce the unfolded protein response (UPR) pathway. The polypeptide is Zinc transporter ZTP29 (ZTP29) (Arabidopsis thaliana (Mouse-ear cress)).